The following is a 410-amino-acid chain: Digeranylgeranylglycerophospholipid reductase (410 aa).

Ala15, Glu34, Val118, Asp286, Gly298, and Ile299 together coordinate FAD. Positions 343 and 379 each coordinate a 2,3-bis-O-(geranylgeranyl)-sn-glycerol 1-phospholipid.

The protein belongs to the geranylgeranyl reductase family. DGGGPL reductase subfamily. FAD serves as cofactor.

The catalysed reaction is a 2,3-bis-O-phytanyl-sn-glycerol 1-phospholipid + 8 A = a 2,3-bis-O-(geranylgeranyl)-sn-glycerol 1-phospholipid + 8 AH2. It carries out the reaction 2,3-bis-O-(phytanyl)-sn-glycerol 1-phosphate + 8 A = 2,3-bis-O-(geranylgeranyl)-sn-glycerol 1-phosphate + 8 AH2. It catalyses the reaction CDP-2,3-bis-O-(geranylgeranyl)-sn-glycerol + 8 AH2 = CDP-2,3-bis-O-(phytanyl)-sn-glycerol + 8 A. The enzyme catalyses archaetidylserine + 8 AH2 = 2,3-bis-O-phytanyl-sn-glycero-3-phospho-L-serine + 8 A. Its pathway is membrane lipid metabolism; glycerophospholipid metabolism. Functionally, is involved in the reduction of 2,3-digeranylgeranylglycerophospholipids (unsaturated archaeols) into 2,3-diphytanylglycerophospholipids (saturated archaeols) in the biosynthesis of archaeal membrane lipids. Can fully reduce the unsaturated isoprenoid side chains of membrane phospholipids and glycolipids. Is also able to reduce the omega-position isoprene of dolichol phosphate. This chain is Digeranylgeranylglycerophospholipid reductase, found in Haloferax volcanii (strain ATCC 29605 / DSM 3757 / JCM 8879 / NBRC 14742 / NCIMB 2012 / VKM B-1768 / DS2) (Halobacterium volcanii).